Reading from the N-terminus, the 312-residue chain is Glyoxylate/hydroxypyruvate reductase A (312 aa).

The active site involves Arg227. His275 (proton donor) is an active-site residue.

The protein belongs to the D-isomer specific 2-hydroxyacid dehydrogenase family. GhrA subfamily.

The protein localises to the cytoplasm. The enzyme catalyses glycolate + NADP(+) = glyoxylate + NADPH + H(+). It carries out the reaction (R)-glycerate + NAD(+) = 3-hydroxypyruvate + NADH + H(+). It catalyses the reaction (R)-glycerate + NADP(+) = 3-hydroxypyruvate + NADPH + H(+). Catalyzes the NADPH-dependent reduction of glyoxylate and hydroxypyruvate into glycolate and glycerate, respectively. The protein is Glyoxylate/hydroxypyruvate reductase A of Shigella dysenteriae serotype 1 (strain Sd197).